The chain runs to 78 residues: Translation initiation factor IF-1, chloroplastic (78 aa).

The 72-residue stretch at 1–72 folds into the S1-like domain; the sequence is MKKQKLIDME…TKGRITYRFH (72 aa).

It belongs to the IF-1 family. Component of the 30S ribosomal translation pre-initiation complex which assembles on the 30S ribosome in the order IF-2 and IF-3, IF-1 and N-formylmethionyl-tRNA(fMet); mRNA recruitment can occur at any time during PIC assembly.

It is found in the plastid. It localises to the chloroplast. In terms of biological role, one of the essential components for the initiation of protein synthesis. Stabilizes the binding of IF-2 and IF-3 on the 30S subunit to which N-formylmethionyl-tRNA(fMet) subsequently binds. Helps modulate mRNA selection, yielding the 30S pre-initiation complex (PIC). Upon addition of the 50S ribosomal subunit IF-1, IF-2 and IF-3 are released leaving the mature 70S translation initiation complex. This is Translation initiation factor IF-1, chloroplastic from Huperzia lucidula (Shining clubmoss).